The following is an 877-amino-acid chain: Leucine--tRNA ligase (877 aa).

Positions 43-53 (PYPSGRIHMGH) match the 'HIGH' region motif. Positions 628–632 (KMSKS) match the 'KMSKS' region motif. ATP is bound at residue K631.

This sequence belongs to the class-I aminoacyl-tRNA synthetase family.

The protein localises to the cytoplasm. The catalysed reaction is tRNA(Leu) + L-leucine + ATP = L-leucyl-tRNA(Leu) + AMP + diphosphate. In Brucella abortus biovar 1 (strain 9-941), this protein is Leucine--tRNA ligase.